A 555-amino-acid chain; its full sequence is MTTARPAKARNEGQWALGNREPLNPNEEMKQAGAPLAVRERIETIYAKNGFDSIDKSDLRGRFRWWGLYTQREQGYDGSWTGDENIEKLEARYFMMRVRCDGGAISAAALRTLGQISVDFARDTADITDRENIQYHWIEVENVPEIWRRLDAVGLRTTEACGDCPRVILGSPLAGESLEEVIDPSWAIAEIARRYIGQPDFADLPRKYKTAISGLQDVAHEVNDVAFIGVNHPEHGPGLDLWVGGGLSTNPMLAQRVGAWVPLHEVPEVWAAVTSVFRDYGYRRLRSKARLKFLVKDWGIEKFREVLETEYLKRPLIDGPAPEPVAHPIDHVGVQRLKNGLNAVGVAPIAGRVSGTILLAVADLAQQAGCDRIRFTPYQKLVLLDIPDDKLDEVVAGLEALGLQSQPSHWRRNLMACSGIEFCKLSFAETRVRAQGLVPELERRLADVNRQLDVPITINLNGCPNSCARIQVADIGLKGQMVDDGEGGSVEGFQVHLGGSLGQDSGFGRKLRQHKVTSDELGDYIERVARNFVKYRGEGERFAQWAMRADEDDLR.

Residues 1 to 31 (MTTARPAKARNEGQWALGNREPLNPNEEMKQ) form a disordered region. The 3'-(S-cysteinyl)-tyrosine (Tyr-Cys) cross-link spans 69–161 (YTQREQGYDG…AVGLRTTEAC (93 aa)). Positions 417, 423, 463, and 467 each coordinate [4Fe-4S] cluster. Siroheme is bound at residue cysteine 467.

This sequence belongs to the nitrite and sulfite reductase 4Fe-4S domain family. In terms of assembly, monomer. Requires siroheme as cofactor. [4Fe-4S] cluster serves as cofactor.

It carries out the reaction hydrogen sulfide + 6 oxidized [2Fe-2S]-[ferredoxin] + 3 H2O = sulfite + 6 reduced [2Fe-2S]-[ferredoxin] + 7 H(+). Catalyzes the reduction of sulfite to sulfide, a step in the biosynthesis of sulfur-containing amino acids and cofactors. The chain is Sulfite reductase [ferredoxin] 2 (sir2) from Mycolicibacterium paratuberculosis (strain ATCC BAA-968 / K-10) (Mycobacterium paratuberculosis).